The chain runs to 517 residues: Putative alpha-L-fucosidase 1 (517 aa).

Residues 1–20 (MATILLLLLGLLVGLPLLRA) form the signal peptide. N-linked (GlcNAc...) asparagine glycosylation is found at Asn-119, Asn-249, Asn-296, Asn-321, Asn-352, Asn-496, and Asn-511.

It belongs to the glycosyl hydrolase 29 family.

It localises to the secreted. It is found in the extracellular space. The protein resides in the apoplast. The catalysed reaction is an alpha-L-fucoside + H2O = L-fucose + an alcohol. Functionally, alpha-L-fucosidase is responsible for hydrolyzing the alpha-1,6-linked fucose joined to the reducing-end N-acetylglucosamine of the carbohydrate moieties of glycoproteins. Active only against 2'-fucosyl-lactitol when heterologously expressed. The protein is Putative alpha-L-fucosidase 1 of Oryza sativa subsp. japonica (Rice).